A 158-amino-acid polypeptide reads, in one-letter code: RNA pyrophosphohydrolase (158 aa).

In terms of domain architecture, Nudix hydrolase spans 9-151 (PLRNGVGIVV…KLHVYKDVKE (143 aa)). Positions 43–64 (GGVDKGEDYLTAAYRELEEETS) match the Nudix box motif.

It belongs to the Nudix hydrolase family. RppH subfamily. It depends on a divalent metal cation as a cofactor.

Accelerates the degradation of transcripts by removing pyrophosphate from the 5'-end of triphosphorylated RNA, leading to a more labile monophosphorylated state that can stimulate subsequent ribonuclease cleavage. In Pelagibacter ubique (strain HTCC1062), this protein is RNA pyrophosphohydrolase.